Reading from the N-terminus, the 451-residue chain is Trigger factor (451 aa).

One can recognise a PPIase FKBP-type domain in the interval 165 to 250 (DDKLTIDFEG…LHQIQAREVL (86 aa)).

Belongs to the FKBP-type PPIase family. Tig subfamily.

Its subcellular location is the cytoplasm. It catalyses the reaction [protein]-peptidylproline (omega=180) = [protein]-peptidylproline (omega=0). Involved in protein export. Acts as a chaperone by maintaining the newly synthesized protein in an open conformation. Functions as a peptidyl-prolyl cis-trans isomerase. The polypeptide is Trigger factor (Helicobacter acinonychis (strain Sheeba)).